The chain runs to 172 residues: 3-hydroxydecanoyl-[acyl-carrier-protein] dehydratase (172 aa).

His71 is a catalytic residue.

It belongs to the thioester dehydratase family. FabA subfamily. In terms of assembly, homodimer.

The protein localises to the cytoplasm. The catalysed reaction is a (3R)-hydroxyacyl-[ACP] = a (2E)-enoyl-[ACP] + H2O. The enzyme catalyses (3R)-hydroxydecanoyl-[ACP] = (2E)-decenoyl-[ACP] + H2O. It catalyses the reaction (2E)-decenoyl-[ACP] = (3Z)-decenoyl-[ACP]. It participates in lipid metabolism; fatty acid biosynthesis. Functionally, necessary for the introduction of cis unsaturation into fatty acids. Catalyzes the dehydration of (3R)-3-hydroxydecanoyl-ACP to E-(2)-decenoyl-ACP and then its isomerization to Z-(3)-decenoyl-ACP. Can catalyze the dehydratase reaction for beta-hydroxyacyl-ACPs with saturated chain lengths up to 16:0, being most active on intermediate chain length. This Pseudoalteromonas atlantica (strain T6c / ATCC BAA-1087) protein is 3-hydroxydecanoyl-[acyl-carrier-protein] dehydratase.